Reading from the N-terminus, the 246-residue chain is tRNA (guanine-N(7)-)-methyltransferase (246 aa).

Positions 1 to 23 (MIESSSPTPPALHEGAPADVSHP) are disordered. Residues glutamate 75, glutamate 100, aspartate 127, and aspartate 150 each coordinate S-adenosyl-L-methionine. Residue aspartate 150 is part of the active site. Position 154 (lysine 154) interacts with substrate. The interval 156–161 (KHNKRR) is interaction with RNA. Substrate contacts are provided by residues aspartate 186 and 225–228 (TKFE).

The protein belongs to the class I-like SAM-binding methyltransferase superfamily. TrmB family.

It catalyses the reaction guanosine(46) in tRNA + S-adenosyl-L-methionine = N(7)-methylguanosine(46) in tRNA + S-adenosyl-L-homocysteine. It participates in tRNA modification; N(7)-methylguanine-tRNA biosynthesis. Catalyzes the formation of N(7)-methylguanine at position 46 (m7G46) in tRNA. The polypeptide is tRNA (guanine-N(7)-)-methyltransferase (Polaromonas naphthalenivorans (strain CJ2)).